The chain runs to 433 residues: Glutamate-1-semialdehyde 2,1-aminomutase (433 aa).

An N6-(pyridoxal phosphate)lysine modification is found at Lys-271.

This sequence belongs to the class-III pyridoxal-phosphate-dependent aminotransferase family. HemL subfamily. As to quaternary structure, homodimer. Requires pyridoxal 5'-phosphate as cofactor.

The protein localises to the cytoplasm. The enzyme catalyses (S)-4-amino-5-oxopentanoate = 5-aminolevulinate. The protein operates within porphyrin-containing compound metabolism; protoporphyrin-IX biosynthesis; 5-aminolevulinate from L-glutamyl-tRNA(Glu): step 2/2. Its pathway is porphyrin-containing compound metabolism; chlorophyll biosynthesis. The protein is Glutamate-1-semialdehyde 2,1-aminomutase of Prochlorococcus marinus (strain SARG / CCMP1375 / SS120).